The primary structure comprises 278 residues: Elongation factor Ts (278 aa).

Positions 80 to 83 are involved in Mg(2+) ion dislocation from EF-Tu; that stretch reads TDFV.

It belongs to the EF-Ts family.

Its subcellular location is the cytoplasm. In terms of biological role, associates with the EF-Tu.GDP complex and induces the exchange of GDP to GTP. It remains bound to the aminoacyl-tRNA.EF-Tu.GTP complex up to the GTP hydrolysis stage on the ribosome. The polypeptide is Elongation factor Ts (Renibacterium salmoninarum (strain ATCC 33209 / DSM 20767 / JCM 11484 / NBRC 15589 / NCIMB 2235)).